Reading from the N-terminus, the 407-residue chain is Eukaryotic initiation factor 4A-II (407 aa).

The tract at residues 1-23 (MSGGSADYSRDHGGPEGMEPDGV) is disordered. Positions 33 to 61 (DNFDDMNLKESLLRGIYAYGFEKPSAIQQ) match the Q motif motif. Residues 64-235 (IIPCIKGYDV…KKFMREPIRI (172 aa)) form the Helicase ATP-binding domain. 77–84 (AQSGTGKT) is a binding site for ATP. The DEAD box signature appears at 183–186 (DEAD). The region spanning 246 to 407 (GIKQFYINVE…EMPMNVADLI (162 aa)) is the Helicase C-terminal domain.

Belongs to the DEAD box helicase family. eIF4A subfamily. As to quaternary structure, eIF4F is a multi-subunit complex, the composition of which varies with external and internal environmental conditions. It is composed of at least EIF4A, EIF4E and EIF4G1/EIFFG3. Interacts with EIF4E.

It catalyses the reaction ATP + H2O = ADP + phosphate + H(+). Its function is as follows. ATP-dependent RNA helicase which is a subunit of the eIF4F complex involved in cap recognition and is required for mRNA binding to ribosome. In the current model of translation initiation, eIF4A unwinds RNA secondary structures in the 5'-UTR of mRNAs which is necessary to allow efficient binding of the small ribosomal subunit, and subsequent scanning for the initiator codon. The chain is Eukaryotic initiation factor 4A-II (EIF4A2) from Gallus gallus (Chicken).